A 143-amino-acid chain; its full sequence is MASSSMASAASGFMVATPNIATSNTAPRTSMLFFSSSKNNTTTNFPRLVVRAAEEAAPPAATATAEGEAPPAKAAKPPPIGPKRGTKVRVLRKESYWYKGVGSVVAVDQDPNTRYPVVVRFNKVNYANVSTNNYALDEVEEVK.

A chloroplast-targeting transit peptide spans 1–51 (MASSSMASAASGFMVATPNIATSNTAPRTSMLFFSSSKNNTTTNFPRLVVR). Over residues 56–75 (AAPPAATATAEGEAPPAKAA) the composition is skewed to low complexity. Positions 56–86 (AAPPAATATAEGEAPPAKAAKPPPIGPKRGT) are disordered.

Belongs to the PsaE family. 2 isoforms exists (ratio 1:1). With or without the N-terminal alanine.

Its subcellular location is the plastid. The protein resides in the chloroplast thylakoid membrane. Functionally, stabilizes the interaction between PsaC and the PSI core, assists the docking of the ferredoxin to PSI and interacts with ferredoxin-NADP oxidoreductase. This Nicotiana sylvestris (Wood tobacco) protein is Photosystem I reaction center subunit IV B, chloroplastic (PSAEB).